The sequence spans 261 residues: Cytosolic Fe-S cluster assembly factor Nubp2 homolog (261 aa).

Residue 14-21 (GKGGVGKS) participates in ATP binding. [4Fe-4S] cluster contacts are provided by C188 and C191.

It belongs to the Mrp/NBP35 ATP-binding proteins family. NUBP2/CFD1 subfamily. Heterotetramer of 2 Nubp1 and 2 Nubp2 chains. [4Fe-4S] cluster serves as cofactor.

The protein localises to the cytoplasm. Functionally, component of the cytosolic iron-sulfur (Fe/S) protein assembly (CIA) machinery. Required for maturation of extramitochondrial Fe-S proteins. The Nubp1-Nubp2 heterotetramer forms a Fe-S scaffold complex, mediating the de novo assembly of an Fe-S cluster and its transfer to target apoproteins. The chain is Cytosolic Fe-S cluster assembly factor Nubp2 homolog from Drosophila willistoni (Fruit fly).